A 393-amino-acid polypeptide reads, in one-letter code: Succinate--CoA ligase [ADP-forming] subunit beta (393 aa).

Residues 9-251 form the ATP-grasp domain; that stretch reads KALFEKFGVL…LNEEDPKEIE (243 aa). ATP contacts are provided by residues Lys-46, 53–55, Ser-109, and Glu-114; that span reads GRG. Mg(2+) is bound by residues Asn-206 and Asp-220. Residues Asn-271 and 328–330 each bind substrate; that span reads GIM.

Belongs to the succinate/malate CoA ligase beta subunit family. In terms of assembly, heterotetramer of two alpha and two beta subunits. It depends on Mg(2+) as a cofactor.

It carries out the reaction succinate + ATP + CoA = succinyl-CoA + ADP + phosphate. It catalyses the reaction GTP + succinate + CoA = succinyl-CoA + GDP + phosphate. The protein operates within carbohydrate metabolism; tricarboxylic acid cycle; succinate from succinyl-CoA (ligase route): step 1/1. Its function is as follows. Succinyl-CoA synthetase functions in the citric acid cycle (TCA), coupling the hydrolysis of succinyl-CoA to the synthesis of either ATP or GTP and thus represents the only step of substrate-level phosphorylation in the TCA. The beta subunit provides nucleotide specificity of the enzyme and binds the substrate succinate, while the binding sites for coenzyme A and phosphate are found in the alpha subunit. The chain is Succinate--CoA ligase [ADP-forming] subunit beta from Opitutus terrae (strain DSM 11246 / JCM 15787 / PB90-1).